Consider the following 329-residue polypeptide: Phosphate acyltransferase (329 aa).

It belongs to the PlsX family. Homodimer. Probably interacts with PlsY.

Its subcellular location is the cytoplasm. It carries out the reaction a fatty acyl-[ACP] + phosphate = an acyl phosphate + holo-[ACP]. It functions in the pathway lipid metabolism; phospholipid metabolism. Catalyzes the reversible formation of acyl-phosphate (acyl-PO(4)) from acyl-[acyl-carrier-protein] (acyl-ACP). This enzyme utilizes acyl-ACP as fatty acyl donor, but not acyl-CoA. The sequence is that of Phosphate acyltransferase from Sulfurovum sp. (strain NBC37-1).